A 901-amino-acid polypeptide reads, in one-letter code: Protein translocase subunit SecA (901 aa).

ATP-binding positions include Gln-87, 105–109 (GEGKT), and Asp-512. Positions 885, 887, 896, and 897 each coordinate Zn(2+).

Belongs to the SecA family. Monomer and homodimer. Part of the essential Sec protein translocation apparatus which comprises SecA, SecYEG and auxiliary proteins SecDF-YajC and YidC. Requires Zn(2+) as cofactor.

The protein resides in the cell inner membrane. It localises to the cytoplasm. The enzyme catalyses ATP + H2O + cellular proteinSide 1 = ADP + phosphate + cellular proteinSide 2.. Functionally, part of the Sec protein translocase complex. Interacts with the SecYEG preprotein conducting channel. Has a central role in coupling the hydrolysis of ATP to the transfer of proteins into and across the cell membrane, serving both as a receptor for the preprotein-SecB complex and as an ATP-driven molecular motor driving the stepwise translocation of polypeptide chains across the membrane. This is Protein translocase subunit SecA from Salmonella schwarzengrund (strain CVM19633).